Consider the following 184-residue polypeptide: Bifunctional protein PyrR (184 aa).

Positions 99-111 (IVLVDDVLYTGRT) match the PRPP-binding motif.

This sequence belongs to the purine/pyrimidine phosphoribosyltransferase family. PyrR subfamily. As to quaternary structure, homodimer and homohexamer; in equilibrium.

It catalyses the reaction UMP + diphosphate = 5-phospho-alpha-D-ribose 1-diphosphate + uracil. Functionally, regulates transcriptional attenuation of the pyrimidine nucleotide (pyr) operon by binding in a uridine-dependent manner to specific sites on pyr mRNA. This disrupts an antiterminator hairpin in the RNA and favors formation of a downstream transcription terminator, leading to a reduced expression of downstream genes. Also displays a weak uracil phosphoribosyltransferase activity which is not physiologically significant. This chain is Bifunctional protein PyrR, found in Acetivibrio thermocellus (strain ATCC 27405 / DSM 1237 / JCM 9322 / NBRC 103400 / NCIMB 10682 / NRRL B-4536 / VPI 7372) (Clostridium thermocellum).